A 61-amino-acid polypeptide reads, in one-letter code: Small ribosomal subunit protein uS14 (61 aa).

Zn(2+)-binding residues include C24, C27, C40, and C43.

The protein belongs to the universal ribosomal protein uS14 family. Zinc-binding uS14 subfamily. In terms of assembly, part of the 30S ribosomal subunit. Contacts proteins S3 and S10. The cofactor is Zn(2+).

Functionally, binds 16S rRNA, required for the assembly of 30S particles and may also be responsible for determining the conformation of the 16S rRNA at the A site. The sequence is that of Small ribosomal subunit protein uS14 from Dehalococcoides mccartyi (strain ATCC BAA-2266 / KCTC 15142 / 195) (Dehalococcoides ethenogenes (strain 195)).